A 394-amino-acid polypeptide reads, in one-letter code: 8-amino-7-oxononanoate synthase (394 aa).

Substrate is bound at residue Arg-21. 112 to 113 (GY) is a pyridoxal 5'-phosphate binding site. His-137 provides a ligand contact to substrate. 3 residues coordinate pyridoxal 5'-phosphate: Ser-183, His-211, and Thr-239. The residue at position 242 (Lys-242) is an N6-(pyridoxal phosphate)lysine. Residue Thr-358 coordinates substrate.

The protein belongs to the class-II pyridoxal-phosphate-dependent aminotransferase family. BioF subfamily. As to quaternary structure, homodimer. Requires pyridoxal 5'-phosphate as cofactor.

It carries out the reaction 6-carboxyhexanoyl-[ACP] + L-alanine + H(+) = (8S)-8-amino-7-oxononanoate + holo-[ACP] + CO2. It participates in cofactor biosynthesis; biotin biosynthesis. Catalyzes the decarboxylative condensation of pimeloyl-[acyl-carrier protein] and L-alanine to produce 8-amino-7-oxononanoate (AON), [acyl-carrier protein], and carbon dioxide. The chain is 8-amino-7-oxononanoate synthase from Burkholderia pseudomallei (strain K96243).